A 483-amino-acid polypeptide reads, in one-letter code: Regulatory protein ViaA (483 aa).

It belongs to the ViaA family. Homodimer. Interacts with RavA.

It localises to the cytoplasm. Functionally, component of the RavA-ViaA chaperone complex, which may act on the membrane to optimize the function of some of the respiratory chains. ViaA stimulates the ATPase activity of RavA. This is Regulatory protein ViaA from Escherichia coli (strain 55989 / EAEC).